The chain runs to 155 residues: Transcriptional regulator MraZ (155 aa).

2 consecutive SpoVT-AbrB domains span residues 15-62 (TYEN…GMDR) and 93-136 (SEEL…NPTA).

Belongs to the MraZ family. Forms oligomers.

The protein resides in the cytoplasm. The protein localises to the nucleoid. The chain is Transcriptional regulator MraZ from Rhodospirillum rubrum (strain ATCC 11170 / ATH 1.1.1 / DSM 467 / LMG 4362 / NCIMB 8255 / S1).